Consider the following 217-residue polypeptide: Octanoyltransferase (217 aa).

Residues 32 to 207 (SESPDELWIV…TFSQLLGYQH (176 aa)) enclose the BPL/LPL catalytic domain. Residues 71–78 (RGGQVTYH), 138–140 (SLG), and 151–153 (GLA) each bind substrate. Cys-169 acts as the Acyl-thioester intermediate in catalysis.

The protein belongs to the LipB family.

Its subcellular location is the cytoplasm. The enzyme catalyses octanoyl-[ACP] + L-lysyl-[protein] = N(6)-octanoyl-L-lysyl-[protein] + holo-[ACP] + H(+). Its pathway is protein modification; protein lipoylation via endogenous pathway; protein N(6)-(lipoyl)lysine from octanoyl-[acyl-carrier-protein]: step 1/2. In terms of biological role, catalyzes the transfer of endogenously produced octanoic acid from octanoyl-acyl-carrier-protein onto the lipoyl domains of lipoate-dependent enzymes. Lipoyl-ACP can also act as a substrate although octanoyl-ACP is likely to be the physiological substrate. The sequence is that of Octanoyltransferase from Shewanella sp. (strain W3-18-1).